A 246-amino-acid chain; its full sequence is Probable transcriptional regulatory protein YebC (246 aa).

Residues Met-1 to Lys-20 are disordered.

This sequence belongs to the TACO1 family.

The protein resides in the cytoplasm. The chain is Probable transcriptional regulatory protein YebC from Escherichia coli O6:K15:H31 (strain 536 / UPEC).